The primary structure comprises 344 residues: Axoneme-associated protein mst101(1) (344 aa).

12 consecutive repeat copies span residues 74–89, 90–105, 106–121, 122–137, 138–153, 154–169, 170–185, 186–201, 202–217, 218–233, 234–249, and 250–265. The segment at 74 to 344 is 17 X 16 AA approximate tandem repeats of K-K-K-C-X-E-X-A-[KQ]-K-X-X-E-X-A-X; the sequence is KKKCAEAAKK…AAQKKCEPKK (271 aa). Residues 206–244 form a disordered region; the sequence is KEAAEKKKCEERAKKEKEAAEKKKCEERAKKEKEAAEKK. Residues 266-281 form a 13; approximate repeat; sequence AQKKKCAELAKKAKEA. The 14; approximate repeat unit spans residues 282 to 297; the sequence is AEKKKCAKKAGEKGSK. Residues 285 to 315 show a composition bias toward basic and acidic residues; that stretch reads KKCAKKAGEKGSKQSGSDKGKKNGKKNDMKN. The tract at residues 285–318 is disordered; it reads KKCAKKAGEKGSKQSGSDKGKKNGKKNDMKNKCA. One copy of the 15; approximate repeat lies at 298 to 313; it reads QSGSDKGKKNGKKNDM. The stretch at 314–329 is repeat 16; that stretch reads KNKCAMLAKKAKEEAL. A 17; truncated repeat occupies 330 to 344; the sequence is KKKCAAAQKKCEPKK.

Testis. Located in spermatocytes and spermatid bundles.

Its subcellular location is the cytoplasm. Functionally, possible structural role in the sperm tail. It is associated with axonemal structures. This is Axoneme-associated protein mst101(1) (mst101(1)) from Drosophila hydei (Fruit fly).